Consider the following 578-residue polypeptide: Proteasome-associated ATPase (578 aa).

The stretch at 8 to 84 (TAAELRNQVR…LKEEVDRLAQ (77 aa)) forms a coiled coil. ATP is bound at residue 267–272 (GCGKTL). The docks into pockets in the proteasome alpha-ring stretch occupies residues 577–578 (YL).

It belongs to the AAA ATPase family. As to quaternary structure, homohexamer. Assembles into a hexameric ring structure that caps the 20S proteasome core. Strongly interacts with the prokaryotic ubiquitin-like protein Pup through a hydrophobic interface; the interacting region of ARC lies in its N-terminal coiled-coil domain. There is one Pup binding site per ARC hexamer ring. Upon ATP-binding, the C-terminus of ARC interacts with the alpha-rings of the proteasome core, possibly by binding to the intersubunit pockets.

Its pathway is protein degradation; proteasomal Pup-dependent pathway. Functionally, ATPase which is responsible for recognizing, binding, unfolding and translocation of pupylated proteins into the bacterial 20S proteasome core particle. May be essential for opening the gate of the 20S proteasome via an interaction with its C-terminus, thereby allowing substrate entry and access to the site of proteolysis. Thus, the C-termini of the proteasomal ATPase may function like a 'key in a lock' to induce gate opening and therefore regulate proteolysis. This Kribbella flavida (strain DSM 17836 / JCM 10339 / NBRC 14399) protein is Proteasome-associated ATPase.